The primary structure comprises 439 residues: D-inositol 3-phosphate glycosyltransferase (439 aa).

H21 is a binding site for 1D-myo-inositol 3-phosphate. Residues 27–28 and G35 contribute to the UDP-N-acetyl-alpha-D-glucosamine site; that span reads QP. Residues 32–37, K90, Y123, T147, and R167 contribute to the 1D-myo-inositol 3-phosphate site; that span reads DAGGMN. The UDP-N-acetyl-alpha-D-glucosamine site is built by R241, K246, and Q299. Residues Y308, R309, and A311 each coordinate Mg(2+). 2 residues coordinate UDP-N-acetyl-alpha-D-glucosamine: E321 and E329. Residue T335 coordinates Mg(2+).

It belongs to the glycosyltransferase group 1 family. MshA subfamily. As to quaternary structure, homodimer.

The catalysed reaction is 1D-myo-inositol 3-phosphate + UDP-N-acetyl-alpha-D-glucosamine = 1D-myo-inositol 2-acetamido-2-deoxy-alpha-D-glucopyranoside 3-phosphate + UDP + H(+). In terms of biological role, catalyzes the transfer of a N-acetyl-glucosamine moiety to 1D-myo-inositol 3-phosphate to produce 1D-myo-inositol 2-acetamido-2-deoxy-glucopyranoside 3-phosphate in the mycothiol biosynthesis pathway. This chain is D-inositol 3-phosphate glycosyltransferase, found in Mycobacterium sp. (strain JLS).